The chain runs to 793 residues: Outer membrane protein assembly factor BamA (793 aa).

The signal sequence occupies residues 1 to 19; sequence MKKLLIASLLFGTTTTVFA. 5 POTRA domains span residues 22–89, 90–170, 173–259, 262–341, and 344–418; these read FVAK…VVAK, SIIS…INED, AKLA…VNEG, YDLR…VDAG, and LTVR…VKER.

It belongs to the BamA family. In terms of assembly, part of the Bam complex.

It is found in the cell outer membrane. In terms of biological role, part of the outer membrane protein assembly complex, which is involved in assembly and insertion of beta-barrel proteins into the outer membrane. This Haemophilus influenzae protein is Outer membrane protein assembly factor BamA.